The chain runs to 109 residues: Biphenyl dioxygenase ferredoxin subunit (109 aa).

Positions 4–100 (TKACSVDEVP…IRIEGRDVLV (97 aa)) constitute a Rieske domain. Residues Cys-43, His-45, Cys-63, and His-66 each contribute to the [2Fe-2S] cluster site.

Belongs to the bacterial ring-hydroxylating dioxygenase ferredoxin component family. In terms of assembly, this dioxygenase system consists of four proteins: the two subunits of the hydroxylase component (BphA1 and BphA2), a ferredoxin (BphA3) and a ferredoxin reductase (BphA4).

This protein seems to be a 2Fe-2S ferredoxin. The chain is Biphenyl dioxygenase ferredoxin subunit (bphA3) from Pseudomonas sp. (strain KKS102).